The sequence spans 401 residues: Phosphoglycerate kinase (401 aa).

Substrate contacts are provided by residues 20–22 (DFN), Arg35, 58–61 (HLGR), Arg117, and Arg154. Residues Lys204, Gly298, Glu329, and 358-361 (GGDS) each bind ATP.

It belongs to the phosphoglycerate kinase family. Monomer.

Its subcellular location is the cytoplasm. The enzyme catalyses (2R)-3-phosphoglycerate + ATP = (2R)-3-phospho-glyceroyl phosphate + ADP. It participates in carbohydrate degradation; glycolysis; pyruvate from D-glyceraldehyde 3-phosphate: step 2/5. The protein is Phosphoglycerate kinase of Bifidobacterium longum (strain NCC 2705).